Here is a 130-residue protein sequence, read N- to C-terminus: Small ribosomal subunit protein uS9 (130 aa).

Belongs to the universal ribosomal protein uS9 family.

The protein is Small ribosomal subunit protein uS9 of Streptococcus suis (strain 98HAH33).